Here is a 185-residue protein sequence, read N- to C-terminus: CASP-like protein 5A1 (185 aa).

Over 1–45 (MNVSHPAVHPVGVPPALGGHAVPPRMRMRVRMEYLVFQGMPLPGT) the chain is Cytoplasmic. Residues 46 to 66 (LGGLVLRLGQFCSALIAFSVM) traverse the membrane as a helical segment. Over 67–76 (LSVRDFSVTA) the chain is Extracellular. Residues 77 to 97 (FCYLVAATVLQCLWSLAMAVI) form a helical membrane-spanning segment. Residues 98–121 (DVYALLVKRSLRNPLLVSIFVVGD) lie on the Cytoplasmic side of the membrane. Residues 122-142 (GVTATLTFAAACASAGVIVLI) form a helical membrane-spanning segment. The Extracellular segment spans residues 143-160 (GNDIAMCKDNPCANYEAA). Residues 161–181 (IIMAFLSWFMVSISFILTFWL) traverse the membrane as a helical segment. Over 182 to 185 (LATL) the chain is Cytoplasmic.

Belongs to the Casparian strip membrane proteins (CASP) family. As to quaternary structure, homodimer and heterodimers.

The protein localises to the cell membrane. The polypeptide is CASP-like protein 5A1 (Picea sitchensis (Sitka spruce)).